The primary structure comprises 1422 residues: FH1/FH2 domain-containing protein 3 (1422 aa).

Residues 18-411 (NSTNFPEPSR…NFGNNSYHSS (394 aa)) enclose the GBD/FH3 domain. Disordered stretches follow at residues 323–464 (RHED…RRRQ), 521–666 (ACLA…GVNG), 687–708 (RKSP…QEAE), 754–781 (SGDL…VQPK), 821–849 (LGHR…PPLL), 1262–1305 (QQKQ…SYAE), 1320–1357 (SSPS…SPNV), and 1374–1410 (TQVP…EEAR). The residue at position 345 (S345) is a Phosphoserine. The span at 357–366 (LDRRRSRRHS) shows a compositional bias: basic residues. Residues 367–390 (VQSIKSTLSAPTSPCSQSAPSFKP) are compositionally biased toward polar residues. The residue at position 375 (S375) is a Phosphoserine. Over residues 410–430 (SSRPSSGSSVPTTPTSSVSPP) the composition is skewed to low complexity. Polar residues predominate over residues 438 to 449 (SSPSGLLTSSFR). The stretch at 448–480 (FRQHQESLAAERERRRQEREERLQRIEREERNK) forms a coiled coil. Basic and acidic residues predominate over residues 450-464 (QHQESLAAERERRRQ). The segment covering 521-535 (ACLAPLSHSPSSSDS) has biased composition (low complexity). Positions 536–547 (QEALTVSASSPG) are enriched in polar residues. Acidic residues-rich tracts occupy residues 559–569 (PEPESEAEPEA) and 592–603 (ETEVEQALEQEP). Over residues 604–624 (EERASLSEKERQNEGVNERDN) the composition is skewed to basic and acidic residues. The span at 626-635 (SASSVSSSSS) shows a compositional bias: low complexity. Residues 637 to 651 (LEREEKEDKLSRDRT) are compositionally biased toward basic and acidic residues. At S763 the chain carries Phosphoserine. Residue T775 is modified to Phosphothreonine. The span at 827–849 (PGPPPPPPPTFLGLPPPPPPPLL) shows a compositional bias: pro residues. The 32-residue stretch at 827 to 858 (PGPPPPPPPTFLGLPPPPPPPLLDSIPPPPVP) folds into the FH1 domain. The region spanning 883–1279 (GQPTFTKKKK…HRERNKTRGK (397 aa)) is the FH2 domain. The span at 1264-1278 (KQKRANHRERNKTRG) shows a compositional bias: basic residues. Residues 1359 to 1391 (DDAADEIMDRIVKSATQVPSQRVVPRERKRSRA) enclose the DAD domain. The segment covering 1385 to 1400 (ERKRSRANRKSLRRTL) has biased composition (basic residues).

It belongs to the formin homology family. As to quaternary structure, interacts with nestin/NES-based interfilament (IF). Interacts with SQSTM1; isoform 4 threonine phosphorylation disrupts SQSTM1-binding. Phosphorylated on Thr-1474 and Thr-1476 by CK2. Expressed in the heart, kidney and brain. May be down-regulated in various types of heart diseases, including idiopathic dilated, ventricular dilated, familial dilated and perinatal dilated cardiomyopathies, as well as ischemic heart disease (at protein level).

It localises to the cytoplasm. The protein localises to the cytoskeleton. Its subcellular location is the myofibril. The protein resides in the sarcomere. It is found in the z line. Its function is as follows. Actin-organizing protein that may cause stress fiber formation together with cell elongation. Isoform 4 may play a role in actin filament polymerization in cardiomyocytes. In Homo sapiens (Human), this protein is FH1/FH2 domain-containing protein 3 (FHOD3).